The following is an 812-amino-acid chain: DNA translocase FtsK 1 (812 aa).

Positions 1–11 (MTEKSHKKTAK) are enriched in basic residues. Residues 1-36 (MTEKSHKKTAKGRAGSPSPTSARNKKADNGARGNKV) are disordered. The segment covering 25-36 (KKADNGARGNKV) has biased composition (basic and acidic residues). The next 5 membrane-spanning stretches (helical) occupy residues 63-83 (IGDALWLMGLAATLYLVISLI), 116-136 (VGYYLFGWSFWWWIAAACVML), 156-176 (IAAAALFVLTVFSPVLEYFVL), 184-204 (LPVGAGGMVGIRVGAVFAWLL), and 210-230 (LLIILVVLLLSLSLLVQISWL). Residues 231 to 812 (EFLNGAGRAV…RKILAHKDHL (582 aa)) are Cytoplasmic-facing. Residues 461 to 670 (GTPVVGDLAK…FTVQSKIDSR (210 aa)) form the FtsK domain. Position 481-486 (481-486 (GSGKSV)) interacts with ATP.

Belongs to the FtsK/SpoIIIE/SftA family. Homohexamer. Forms a ring that surrounds DNA.

Its subcellular location is the cell inner membrane. Essential cell division protein that coordinates cell division and chromosome segregation. The N-terminus is involved in assembly of the cell-division machinery. The C-terminus functions as a DNA motor that moves dsDNA in an ATP-dependent manner towards the dif recombination site, which is located within the replication terminus region. Translocation stops specifically at Xer-dif sites, where FtsK interacts with the Xer recombinase, allowing activation of chromosome unlinking by recombination. FtsK orienting polar sequences (KOPS) guide the direction of DNA translocation. FtsK can remove proteins from DNA as it translocates, but translocation stops specifically at XerCD-dif site, thereby preventing removal of XerC and XerD from dif. This Neisseria meningitidis serogroup A / serotype 4A (strain DSM 15465 / Z2491) protein is DNA translocase FtsK 1 (ftsK1).